The chain runs to 95 residues: Acylphosphatase (95 aa).

The 87-residue stretch at 7–93 (TWQLFAHGRV…QLFDRFDWLP (87 aa)) folds into the Acylphosphatase-like domain. Catalysis depends on residues Arg22 and Asn40.

This sequence belongs to the acylphosphatase family.

The catalysed reaction is an acyl phosphate + H2O = a carboxylate + phosphate + H(+). In Cupriavidus metallidurans (strain ATCC 43123 / DSM 2839 / NBRC 102507 / CH34) (Ralstonia metallidurans), this protein is Acylphosphatase (acyP).